We begin with the raw amino-acid sequence, 410 residues long: Toluene 1,2-dioxygenase system ferredoxin--NAD(+) reductase component (410 aa).

4–35 (HVAIIGNGVGGFTTAQALRAEGFEGRISLIGD) provides a ligand contact to FAD. 145 to 173 (RLLIVGGGLIGCEVATTARKLGLSVTILE) contacts NAD(+).

The protein belongs to the bacterial ring-hydroxylating dioxygenase ferredoxin reductase family. As to quaternary structure, this dioxygenase system consists of four proteins: the two subunits of the hydroxylase component (todC1 and todC2), a ferredoxin (TodB) and a ferredoxin reductase (TodA). The cofactor is FAD.

The enzyme catalyses 2 reduced [2Fe-2S]-[ferredoxin] + NAD(+) + H(+) = 2 oxidized [2Fe-2S]-[ferredoxin] + NADH. The protein operates within xenobiotic degradation; toluene degradation. Its function is as follows. Part of the electron transfer component of toluene 1,2-dioxygenase, transfers electrons from ferredoxin (TodB) to NADH. This is Toluene 1,2-dioxygenase system ferredoxin--NAD(+) reductase component (todA) from Pseudomonas putida (strain ATCC 700007 / DSM 6899 / JCM 31910 / BCRC 17059 / LMG 24140 / F1).